The following is a 185-amino-acid chain: Acireductone dioxygenase (185 aa).

The Fe(2+) site is built by H101, H103, E107, and H145. Ni(2+) is bound by residues H101, H103, E107, and H145.

This sequence belongs to the acireductone dioxygenase (ARD) family. Monomer. The cofactor is Fe(2+). It depends on Ni(2+) as a cofactor.

The catalysed reaction is 1,2-dihydroxy-5-(methylsulfanyl)pent-1-en-3-one + O2 = 3-(methylsulfanyl)propanoate + CO + formate + 2 H(+). It catalyses the reaction 1,2-dihydroxy-5-(methylsulfanyl)pent-1-en-3-one + O2 = 4-methylsulfanyl-2-oxobutanoate + formate + 2 H(+). Its pathway is amino-acid biosynthesis; L-methionine biosynthesis via salvage pathway; L-methionine from S-methyl-5-thio-alpha-D-ribose 1-phosphate: step 5/6. Functionally, catalyzes 2 different reactions between oxygen and the acireductone 1,2-dihydroxy-3-keto-5-methylthiopentene (DHK-MTPene) depending upon the metal bound in the active site. Fe-containing acireductone dioxygenase (Fe-ARD) produces formate and 2-keto-4-methylthiobutyrate (KMTB), the alpha-ketoacid precursor of methionine in the methionine recycle pathway. Ni-containing acireductone dioxygenase (Ni-ARD) produces methylthiopropionate, carbon monoxide and formate, and does not lie on the methionine recycle pathway. This chain is Acireductone dioxygenase, found in Synechococcus sp. (strain RCC307).